Consider the following 125-residue polypeptide: Small ribosomal subunit protein uS13 (125 aa).

This sequence belongs to the universal ribosomal protein uS13 family. In terms of assembly, part of the 30S ribosomal subunit. Forms a loose heterodimer with protein S19. Forms two bridges to the 50S subunit in the 70S ribosome.

Its function is as follows. Located at the top of the head of the 30S subunit, it contacts several helices of the 16S rRNA. In the 70S ribosome it contacts the 23S rRNA (bridge B1a) and protein L5 of the 50S subunit (bridge B1b), connecting the 2 subunits; these bridges are implicated in subunit movement. Contacts the tRNAs in the A and P-sites. This Rickettsia akari (strain Hartford) protein is Small ribosomal subunit protein uS13.